Here is a 174-residue protein sequence, read N- to C-terminus: RNA pyrophosphohydrolase (174 aa).

The Nudix hydrolase domain occupies 6-150; the sequence is GFRPNVGIVI…KREVYRRVMK (145 aa). The Nudix box motif lies at 38 to 59; it reads GGVDDGETPEQAMFRELYEEIG.

The protein belongs to the Nudix hydrolase family. RppH subfamily. A divalent metal cation is required as a cofactor.

Accelerates the degradation of transcripts by removing pyrophosphate from the 5'-end of triphosphorylated RNA, leading to a more labile monophosphorylated state that can stimulate subsequent ribonuclease cleavage. This is RNA pyrophosphohydrolase from Tolumonas auensis (strain DSM 9187 / NBRC 110442 / TA 4).